Reading from the N-terminus, the 380-residue chain is Cytochrome b (380 aa).

4 helical membrane-spanning segments follow: residues 34–54 (FGSL…LLAA), 78–99 (WLIR…YLHI), 114–134 (WNTG…GYVL), and 179–199 (FFAL…IHLT). Histidine 84 and histidine 98 together coordinate heme b. The heme b site is built by histidine 183 and histidine 197. Histidine 202 serves as a coordination point for a ubiquinone. A run of 4 helical transmembrane segments spans residues 227–247 (LKDI…ALFS), 289–309 (LGGV…PFLH), 321–341 (LSQL…WVGS), and 348–368 (FIII…VLFP).

It belongs to the cytochrome b family. As to quaternary structure, the cytochrome bc1 complex contains 11 subunits: 3 respiratory subunits (MT-CYB, CYC1 and UQCRFS1), 2 core proteins (UQCRC1 and UQCRC2) and 6 low-molecular weight proteins (UQCRH/QCR6, UQCRB/QCR7, UQCRQ/QCR8, UQCR10/QCR9, UQCR11/QCR10 and a cleavage product of UQCRFS1). This cytochrome bc1 complex then forms a dimer. Heme b is required as a cofactor.

It localises to the mitochondrion inner membrane. Its function is as follows. Component of the ubiquinol-cytochrome c reductase complex (complex III or cytochrome b-c1 complex) that is part of the mitochondrial respiratory chain. The b-c1 complex mediates electron transfer from ubiquinol to cytochrome c. Contributes to the generation of a proton gradient across the mitochondrial membrane that is then used for ATP synthesis. This Pharomachrus antisianus (Crested quetzal) protein is Cytochrome b (MT-CYB).